The sequence spans 316 residues: Pantothenate kinase (316 aa).

An ATP-binding site is contributed by 95 to 102; the sequence is GSVAVGKS.

It belongs to the prokaryotic pantothenate kinase family.

It localises to the cytoplasm. The catalysed reaction is (R)-pantothenate + ATP = (R)-4'-phosphopantothenate + ADP + H(+). It functions in the pathway cofactor biosynthesis; coenzyme A biosynthesis; CoA from (R)-pantothenate: step 1/5. The chain is Pantothenate kinase from Shewanella sp. (strain ANA-3).